A 172-amino-acid polypeptide reads, in one-letter code: Adenine phosphoribosyltransferase (172 aa).

This sequence belongs to the purine/pyrimidine phosphoribosyltransferase family. As to quaternary structure, homodimer.

It localises to the cytoplasm. The enzyme catalyses AMP + diphosphate = 5-phospho-alpha-D-ribose 1-diphosphate + adenine. Its pathway is purine metabolism; AMP biosynthesis via salvage pathway; AMP from adenine: step 1/1. Functionally, catalyzes a salvage reaction resulting in the formation of AMP, that is energically less costly than de novo synthesis. This is Adenine phosphoribosyltransferase from Nostoc punctiforme (strain ATCC 29133 / PCC 73102).